A 551-amino-acid chain; its full sequence is Nicotianamine aminotransferase B (551 aa).

Residues 24 to 127 (KSNGHGVAAA…GHAAAAAEEE (104 aa)) form a disordered region. The segment covering 86–96 (GHRESNGHAEA) has biased composition (basic and acidic residues). The segment covering 111-123 (AANGESNGHAAAA) has biased composition (low complexity). Lysine 379 carries the post-translational modification N6-(pyridoxal phosphate)lysine.

It belongs to the class-I pyridoxal-phosphate-dependent aminotransferase family. It depends on pyridoxal 5'-phosphate as a cofactor. As to expression, expressed in roots, but not in leaves.

It catalyses the reaction nicotianamine + 2-oxoglutarate = 3''-deamino-3''-oxonicotianamine + L-glutamate. Functionally, involved in biosynthesis of mugineic acid family phytosiderophores. The chain is Nicotianamine aminotransferase B from Hordeum vulgare (Barley).